A 335-amino-acid chain; its full sequence is Protein BIG1 (335 aa).

The N-terminal stretch at 1–17 (MQTVLKYLLLIMCGSFC) is a signal peptide. The Lumenal segment spans residues 20–275 (EELQNQTNVP…FDSQLIENNR (256 aa)). Asn24 and Asn144 each carry an N-linked (GlcNAc...) asparagine glycan. A helical transmembrane segment spans residues 276-296 (GLLQLIFTILVGYILIQFFFT). Residues 297-335 (KKTIVDEKITNKKDNVKQTSPQLLKKVQEIQKKPSQQVS) are Cytoplasmic-facing.

The protein belongs to the BIG1 family. N-glycosylated.

It localises to the endoplasmic reticulum membrane. Its function is as follows. Required for normal beta-1,6-glucan synthesis. The protein is Protein BIG1 (BIG1) of Saccharomyces cerevisiae (strain ATCC 204508 / S288c) (Baker's yeast).